The chain runs to 150 residues: D-aminoacyl-tRNA deacylase (150 aa).

Positions 138–139 match the Gly-cisPro motif, important for rejection of L-amino acids motif; it reads GP.

It belongs to the DTD family. As to quaternary structure, homodimer.

The protein resides in the cytoplasm. It carries out the reaction glycyl-tRNA(Ala) + H2O = tRNA(Ala) + glycine + H(+). The enzyme catalyses a D-aminoacyl-tRNA + H2O = a tRNA + a D-alpha-amino acid + H(+). An aminoacyl-tRNA editing enzyme that deacylates mischarged D-aminoacyl-tRNAs. Also deacylates mischarged glycyl-tRNA(Ala), protecting cells against glycine mischarging by AlaRS. Acts via tRNA-based rather than protein-based catalysis; rejects L-amino acids rather than detecting D-amino acids in the active site. By recycling D-aminoacyl-tRNA to D-amino acids and free tRNA molecules, this enzyme counteracts the toxicity associated with the formation of D-aminoacyl-tRNA entities in vivo and helps enforce protein L-homochirality. The protein is D-aminoacyl-tRNA deacylase of Bacteroides fragilis (strain YCH46).